The following is a 52-amino-acid chain: UPF0391 membrane protein XOO4217 (52 aa).

2 consecutive transmembrane segments (helical) span residues 5–25 and 27–47; these read AMIF…GIAG and ATNI…ISMF.

This sequence belongs to the UPF0391 family.

The protein localises to the cell membrane. The polypeptide is UPF0391 membrane protein XOO4217 (Xanthomonas oryzae pv. oryzae (strain KACC10331 / KXO85)).